The sequence spans 329 residues: Sideroflexin (329 aa).

A run of 5 helical transmembrane segments spans residues 95 to 115 (AFLPINVIICAGLILPNASIG), 147 to 167 (ILEAYASAVGISCSLAVGLGW), 183 to 203 (LRMMVPFTAVTSAGIANVLIM), 238 to 258 (FSRAATSFPALLLPPIVMGLF), and 274 to 294 (LNLAVIAAIFNTSLPAAIALF).

Belongs to the sideroflexin family.

It localises to the mitochondrion membrane. Mitochondrial amino-acid transporter that mediates transport of serine into mitochondria. The polypeptide is Sideroflexin (Dictyostelium discoideum (Social amoeba)).